Here is a 60-residue protein sequence, read N- to C-terminus: Cytotoxin 3 (60 aa).

4 disulfide bridges follow: C3–C21, C14–C38, C42–C53, and C54–C59.

The protein belongs to the three-finger toxin family. Short-chain subfamily. Type IA cytotoxin sub-subfamily. As to quaternary structure, monomer in solution; Homodimer and oligomer in the presence of negatively charged lipids forming a pore with a size ranging between 20 and 30 Angstroms. Expressed by the venom gland.

It localises to the secreted. Its subcellular location is the target cell membrane. Shows cytolytic activity on many different cells by forming pore in lipid membranes. In vivo, increases heart rate or kills the animal by cardiac arrest. In addition, it binds to heparin with high affinity, interacts with Kv channel-interacting protein 1 (KCNIP1) in a calcium-independent manner, and binds to integrin alpha-V/beta-3 (ITGAV/ITGB3) with moderate affinity. In Naja mossambica (Mozambique spitting cobra), this protein is Cytotoxin 3.